The sequence spans 218 residues: NADH-ubiquinone oxidoreductase 21 kDa subunit, mitochondrial (218 aa).

The N-terminal 33 residues, 1-33 (MSALRITTASAARMLRTSNAMMPSVMGAAQRRA), are a transit peptide targeting the mitochondrion. The interval 31 to 74 (RRALSDSAEPARVPSVESARVPEKLAKEDSPLATPKRNSPDYNV) is disordered. Basic and acidic residues predominate over residues 50–60 (RVPEKLAKEDS).

It belongs to the complex I NDUFS4 subunit family. Complex I is composed of about 40 different subunits. This is a component of the iron-sulfur (IP) fragment of the enzyme.

It localises to the mitochondrion inner membrane. Accessory subunit of the mitochondrial membrane respiratory chain NADH dehydrogenase (Complex I), that is believed not to be involved in catalysis. Complex I functions in the transfer of electrons from NADH to the respiratory chain. The immediate electron acceptor for the enzyme is believed to be ubiquinone. In Neurospora crassa (strain ATCC 24698 / 74-OR23-1A / CBS 708.71 / DSM 1257 / FGSC 987), this protein is NADH-ubiquinone oxidoreductase 21 kDa subunit, mitochondrial (nuo-21).